The primary structure comprises 340 residues: DNA-directed RNA polymerase subunit alpha (340 aa).

Positions 1–238 (MADTFVAKNW…EQLTVFVNFD (238 aa)) are alpha N-terminal domain (alpha-NTD). Residues 253 to 340 (AKLNENLFRS…QAPAPAQPKA (88 aa)) are alpha C-terminal domain (alpha-CTD).

This sequence belongs to the RNA polymerase alpha chain family. Homodimer. The RNAP catalytic core consists of 2 alpha, 1 beta, 1 beta' and 1 omega subunit. When a sigma factor is associated with the core the holoenzyme is formed, which can initiate transcription.

The catalysed reaction is RNA(n) + a ribonucleoside 5'-triphosphate = RNA(n+1) + diphosphate. Its function is as follows. DNA-dependent RNA polymerase catalyzes the transcription of DNA into RNA using the four ribonucleoside triphosphates as substrates. This is DNA-directed RNA polymerase subunit alpha from Myxococcus xanthus (strain DK1622).